Reading from the N-terminus, the 552-residue chain is Glutamine-dependent NAD(+) synthetase (552 aa).

Residues 11–253 (LRIAMAQFDF…DQWLVVDYAA (243 aa)) enclose the CN hydrolase domain. The active-site Proton acceptor; for glutaminase activity is E52. K119 acts as the For glutaminase activity in catalysis. Y125 is an L-glutamine binding site. The active-site Nucleophile; for glutaminase activity is C157. S183 and K189 together coordinate L-glutamine. Residues 275–552 (AWRAVVRGLK…YPITNGYSGQ (278 aa)) are ligase. 298-305 (GLSGGIDS) lines the ATP pocket. Residue N381 participates in deamido-NAD(+) binding. ATP is bound at residue T405. Positions 410 and 522 each coordinate deamido-NAD(+).

The protein in the C-terminal section; belongs to the NAD synthetase family.

The catalysed reaction is deamido-NAD(+) + L-glutamine + ATP + H2O = L-glutamate + AMP + diphosphate + NAD(+) + H(+). It participates in cofactor biosynthesis; NAD(+) biosynthesis; NAD(+) from deamido-NAD(+) (L-Gln route): step 1/1. Its function is as follows. Catalyzes the ATP-dependent amidation of deamido-NAD to form NAD. Uses L-glutamine as a nitrogen source. The sequence is that of Glutamine-dependent NAD(+) synthetase from Xanthomonas campestris pv. campestris (strain 8004).